The chain runs to 188 residues: MAERGSDIRPGQILDHNGSLYLVVKTMHTQPGKGGAYIQAELKNLKTGAKYQERFRSDGYVKRAIVEEVEYQYIFGDGALLTLMNTATYEQVSISADMLGEKGVYLKEGIILTLSFYQGQVVAARVPDYVVLEVVETESVIKGQTASSSYKSAVLENGERISVPPFIKVGERIVVYTVDDTYYERAKD.

This sequence belongs to the elongation factor P family.

The protein localises to the cytoplasm. It participates in protein biosynthesis; polypeptide chain elongation. Its function is as follows. Involved in peptide bond synthesis. Stimulates efficient translation and peptide-bond synthesis on native or reconstituted 70S ribosomes in vitro. Probably functions indirectly by altering the affinity of the ribosome for aminoacyl-tRNA, thus increasing their reactivity as acceptors for peptidyl transferase. This Anaplasma marginale (strain Florida) protein is Elongation factor P.